The sequence spans 214 residues: External core antigen (214 aa).

Residues 1–19 (MQLFHLCLIISCTCPTVQA) form the signal peptide. The interval 25–27 (GWL) is HBEAG. The interval 165-214 (NAPILSTLPETTVVRRRDRGRSPRRRTPSPRRRRSQSPRRRRSQSRESQC) is disordered. Positions 178–207 (VRRRDRGRSPRRRTPSPRRRRSQSPRRRRS) are enriched in basic residues. A 1; half-length repeat occupies 186–192 (SPRRRTP). A 3 X 8 AA repeats of S-P-R-R-R-R-S-Q region spans residues 186–208 (SPRRRTPSPRRRRSQSPRRRRSQ). Residues 186 to 214 (SPRRRTPSPRRRRSQSPRRRRSQSRESQC) constitute a propeptide that is removed on maturation. Repeat copies occupy residues 193 to 200 (SPRRRRSQ) and 201 to 208 (SPRRRRSQ).

The protein belongs to the orthohepadnavirus precore antigen family. In terms of assembly, homodimerizes. In terms of processing, phosphorylated. Cleaved by host furin.

The protein localises to the secreted. The protein resides in the host nucleus. Functionally, may regulate immune response to the intracellular capsid in acting as a T-cell tolerogen, by having an immunoregulatory effect which prevents destruction of infected cells by cytotoxic T-cells. This immune regulation may predispose to chronicity during perinatal infections and prevent severe liver injury during adult infections. In Homo sapiens (Human), this protein is External core antigen.